We begin with the raw amino-acid sequence, 547 residues long: Carboxypeptidase N subunit 2 (547 aa).

An N-terminal signal peptide occupies residues 1 to 21 (MFPGAWLCWVSLLLLARLTQP). In terms of domain architecture, LRRNT spans 22–49 (CPVGCDCFGREVFCSDEQLADIPPDIPP). N-linked (GlcNAc...) asparagine glycosylation is found at Asn-74, Asn-111, and Asn-119. LRR repeat units lie at residues 98–119 (RLQD…IFSN), 122–143 (SLEK…LFCH), 146–167 (ILES…LFQS), 170–191 (DLRT…AFQS), 194–215 (GLQM…ALGS), 218–239 (SLQE…LFSQ), 242–263 (SLEM…LFSS), 266–287 (NLTF…LFAH), 290–311 (GLLH…AFTN), 314–335 (RLVS…VFRN), 338–359 (QLVK…LFHN), and 362–383 (RLQL…IFDT). N-linked (GlcNAc...) asparagine glycosylation is found at Asn-266 and Asn-311. N-linked (GlcNAc...) asparagine glycans are attached at residues Asn-348, Asn-359, and Asn-367. The region spanning 395 to 447 (NPWQCDCHLSYLTSWLRLYNNQISNTHTFCAGPAYLKGQLVPNLKQEQLICPV) is the LRRCT domain. N-linked (GlcNAc...) asparagine glycosylation occurs at Asn-520.

As to quaternary structure, tetramer of two catalytic chains and two glycosylated inactive chains.

It localises to the secreted. In terms of biological role, the 83 kDa subunit binds and stabilizes the catalytic subunit at 37 degrees Celsius and keeps it in circulation. Under some circumstances it may be an allosteric modifier of the catalytic subunit. In Mus musculus (Mouse), this protein is Carboxypeptidase N subunit 2 (Cpn2).